The sequence spans 339 residues: Inositol 2-dehydrogenase (339 aa).

Belongs to the Gfo/Idh/MocA family. In terms of assembly, homotetramer.

The catalysed reaction is myo-inositol + NAD(+) = scyllo-inosose + NADH + H(+). In terms of biological role, involved in the oxidation of myo-inositol (MI) to 2-keto-myo-inositol (2KMI or 2-inosose). This is Inositol 2-dehydrogenase from Leifsonia xyli subsp. xyli (strain CTCB07).